Consider the following 603-residue polypeptide: Pentatricopeptide repeat-containing protein At2g02980, chloroplastic (603 aa).

The transit peptide at 1–38 (MAISSASLISSFSHAETFTKHSKIDTVNTQNPILLISK) directs the protein to the chloroplast. PPR repeat units lie at residues 93–127 (DIVIFNSMARGYSRFTNPLEVFSLFVEILEDGILP), 128–162 (DNYTFPSLLKACAVAKALEEGRQLHCLSMKLGLDD), 163–193 (NVYVCPTLINMYTECEDVDSARCVFDRIVEP), 194–228 (CVVCYNAMITGYARRNRPNEALSLFREMQGKYLKP), 229–263 (NEITLLSVLSSCALLGSLDLGKWIHKYAKKHSFCK), 264–294 (YVKVNTALIDMFAKCGSLDDAVSIFEKMRYK), 295–329 (DTQAWSAMIVAYANHGKAEKSMLMFERMRSENVQP), 330–365 (DEITFLGLLNACSHTGRVEEGRKYFSQMVSKFGIVP), 366–400 (SIKHYGSMVDLLSRAGNLEDAYEFIDKLPISPTPM), and 432–466 (HGGDYVILSNLYARNKKWEYVDSLRKVMKDRKAVK). Residues 401-476 (LWRILLAACS…VPGCSSIEVN (76 aa)) are type E motif. The type E(+) motif stretch occupies residues 477–507 (NVVHEFFSGDGVKSATTKLHRALDEMVKELK). The segment at 508–603 (LSGYVPDTSM…DGKCSCGDFW (96 aa)) is type DYW motif.

This sequence belongs to the PPR family. PCMP-H subfamily.

The protein resides in the plastid. It is found in the chloroplast. Functionally, involved in RNA editing event in chloroplasts. Required for the editing of a single site in ndhD transcript, which is a plastid-encoded subunits of the chloroplast NAD(P)H dehydrogenase (NDH) complex. Not essential for the activity of the NDH complex of the photosynthetic electron transport chain. This chain is Pentatricopeptide repeat-containing protein At2g02980, chloroplastic (PCMP-H26), found in Arabidopsis thaliana (Mouse-ear cress).